The primary structure comprises 461 residues: Glycine--tRNA ligase (461 aa).

The substrate site is built by R100 and E174. Residues R206–E208, F216–F221, E290–L291, and G334–R337 contribute to the ATP site. Substrate is bound at residue F221–E225. Residue E330–G334 coordinates substrate.

It belongs to the class-II aminoacyl-tRNA synthetase family. Homodimer.

The protein resides in the cytoplasm. The enzyme catalyses tRNA(Gly) + glycine + ATP = glycyl-tRNA(Gly) + AMP + diphosphate. Functionally, catalyzes the attachment of glycine to tRNA(Gly). The chain is Glycine--tRNA ligase from Caldanaerobacter subterraneus subsp. tengcongensis (strain DSM 15242 / JCM 11007 / NBRC 100824 / MB4) (Thermoanaerobacter tengcongensis).